We begin with the raw amino-acid sequence, 403 residues long: S-adenosylmethionine sensor upstream of mTORC1 (403 aa).

The span at 1-10 (MEPGPGGRGA) shows a compositional bias: gly residues. The disordered stretch occupies residues 1–32 (MEPGPGGRGAARGQRPPNAAQPREQERKLEQE). Residues 11-22 (ARGQRPPNAAQP) show a composition bias toward low complexity. Basic and acidic residues predominate over residues 23-32 (REQERKLEQE). Arginine 93, glycine 170, aspartate 188, aspartate 200, phenylalanine 201, and serine 242 together coordinate S-adenosyl-L-methionine.

The protein belongs to the BMT2/SAMTOR family. As to quaternary structure, interacts with the GATOR1 complex; interaction is disrupted when SAMTOR binds S-adenosyl-L-methionine. Interacts with the KICSTOR complex; interaction is disrupted when SAMTOR binds S-adenosyl-L-methionine.

Its function is as follows. S-adenosyl-L-methionine-binding protein that acts as an inhibitor of mTORC1 signaling via interaction with the GATOR1 and KICSTOR complexes. Acts as a sensor of S-adenosyl-L-methionine to signal methionine sufficiency to mTORC1: in presence of methionine, binds S-adenosyl-L-methionine, leading to disrupt interaction with the GATOR1 and KICSTOR complexes and promote mTORC1 signaling. Upon methionine starvation, S-adenosyl-L-methionine levels are reduced, thereby promoting the association with GATOR1 and KICSTOR, leading to inhibit mTORC1 signaling. Probably also acts as a S-adenosyl-L-methionine-dependent methyltransferase. In Mus musculus (Mouse), this protein is S-adenosylmethionine sensor upstream of mTORC1.